Here is a 535-residue protein sequence, read N- to C-terminus: MELRSELPSVPGAATAAATATGPPVASVASVAAAAAAAASLPVSVAGGLLRAPPLLLRAAEKYPRTPKCARCRNHGVVSALKGHKRYCRWKDCLCAKCTLIAERQRVMAAQVALRRQQAQEENEARELQLLYGTAEGLALAAANGIIPPRPAYEVFGSVCAADGGGPGAGAPAGTGGGAAGAGSSEAKLQKFDLFPKTLLQAGRPGSPQPQPGKPLSPDGADSGPGTSSPEVRPGSGSENGDGESFSGSPLARASKEAGGSCPGSAGPGGGGEEDSPGSASPLGSESGSEADKEEAEASPAPGLGGGPGPRQRTPLDILTRVFPGHRRGVLELVLQGCGGDVVQAIEQVLNHHRGGLAAGLGPTVPPDKAAVGAVGAADDAWPGRVDAAAAGGPGLPAPLQAGPAAPPHHRPLLAGAMAPGALGSLSSRSAFSPLQPNASHFGADAGAYPLGAPLGLSPLRLAYSAAAAHSRGLAFMAPYSTAGLVPTLGFRPPMDYAFSDLMRDRSAAAAAVHKEPTYGGGLYGPMVNGAPEKQ.

Positions 69 to 116 (CARCRNHGVVSALKGHKRYCRWKDCLCAKCTLIAERQRVMAAQVALRR) form a DNA-binding region, DM. The interval 200–315 (LQAGRPGSPQ…GGPGPRQRTP (116 aa)) is disordered. Positions 313 to 348 (RTPLDILTRVFPGHRRGVLELVLQGCGGDVVQAIEQ) constitute a DMA domain.

Belongs to the DMRT family.

The protein localises to the nucleus. Functionally, may be involved in sexual development. This is Doublesex- and mab-3-related transcription factor A2 (DMRTA2) from Bos taurus (Bovine).